Consider the following 75-residue polypeptide: Small ribosomal subunit protein eS17 (75 aa).

The protein belongs to the eukaryotic ribosomal protein eS17 family.

This chain is Small ribosomal subunit protein eS17, found in Thermoplasma volcanium (strain ATCC 51530 / DSM 4299 / JCM 9571 / NBRC 15438 / GSS1).